A 129-amino-acid chain; its full sequence is uncharacterized protein (129 aa).

Residues 84–98 are compositionally biased toward basic residues; that stretch reads QKTVSKKYKSRKGRR. A disordered region spans residues 84–129; the sequence is QKTVSKKYKSRKGRRYTRERNISSEKNKTDKSHKVRVGKIQNINND. Positions 99–115 are enriched in basic and acidic residues; sequence YTRERNISSEKNKTDKS.

This is an uncharacterized protein from Acanthamoeba polyphaga mimivirus (APMV).